A 1381-amino-acid chain; its full sequence is Protein HEG homolog 1 (1381 aa).

The N-terminal stretch at 1–29 is a signal peptide; sequence MASPRASRWPPPLLLLLLPLLLLPPAAPG. The interval 24-108 is disordered; it reads PPAAPGTRDP…APRGGSADAA (85 aa). The segment covering 25 to 37 has biased composition (pro residues); that stretch reads PAAPGTRDPPPSP. Residues 30 to 1248 lie on the Extracellular side of the membrane; the sequence is TRDPPPSPAR…GLNCGNPYQL (1219 aa). A compositionally biased stretch (low complexity) spans 38 to 52; it reads ARRALSLAPLAGAGL. Basic and acidic residues predominate over residues 55-74; it reads QLERRPEREPPPTPPRERRG. T67 carries O-linked (GalNAc...) threonine glycosylation. The segment covering 93–105 has biased composition (low complexity); it reads RGPSGRAPRGGSA. N-linked (GlcNAc...) asparagine glycosylation is found at N123, N159, N180, and N314. Over residues 301-316 the composition is skewed to low complexity; it reads DLSSSSESTEKLNNST. 2 disordered regions span residues 301–325 and 376–447; these read DLSSSSESTEKLNNSTGLQSSSVSQ and PSAV…RSVA. Residues 424–444 are compositionally biased toward polar residues; the sequence is LASSSEVQNGSPMSQTETVSR. Residues N462, N520, and N610 are each glycosylated (N-linked (GlcNAc...) asparagine). A disordered region spans residues 491–529; that stretch reads STVQSGGSHTALGDRSYSESSSTSSSESLNSSAPRGERS. Low complexity predominate over residues 508–522; the sequence is SESSSTSSSESLNSS. 3 disordered regions span residues 612–680, 706–757, and 774–830; these read SSYD…PLPS, SDAS…PVTS, and QTAD…TLPA. The segment covering 620-648 has biased composition (polar residues); it reads QPSTESPVLHTSNLPSYTPTINMPNTSVV. 2 stretches are compositionally biased toward low complexity: residues 657–680 and 706–748; these read SDSSSSSSSSSSSSSSGPPLPLPS and SDAS…PVLP. Polar residues-rich tracts occupy residues 774–784 and 792–809; these read QTADLKSQSTP and ESKSPSLVSLPTESTKAV. Residues 810–825 are compositionally biased toward low complexity; the sequence is TTNSPLPPSLTESSTE. The EGF-like 1 domain maps to 985–1023; that stretch reads SVNSCAVNPCLHNGECVADNTSRGYHCRCPPSWQGDDCS. Cystine bridges form between C989/C1000, C994/C1011, C1013/C1022, C1029/C1040, C1034/C1049, and C1051/C1062. An EGF-like 2; calcium-binding domain is found at 1025–1063; it reads DVNECLSNPCPSTAMCNNTQGSFICKCPVGYQLEKGICN. N1137 carries N-linked (GlcNAc...) asparagine glycosylation. The helical transmembrane segment at 1249–1269 threads the bilayer; that stretch reads ITVVIAAAGGGLLLILGIALI. At 1270 to 1381 the chain is on the cytoplasmic side; sequence VTCCRKNKND…SDESRRRDYF (112 aa). Residue S1359 is modified to Phosphoserine.

As to quaternary structure, interacts with CCM2 and KRIT1; KRIT1 markedly facilitates interaction with CCM2.

The protein resides in the cell membrane. The protein localises to the cell junction. It localises to the secreted. Its function is as follows. Receptor component of the CCM signaling pathway which is a crucial regulator of heart and vessel formation and integrity. May act through the stabilization of endothelial cell junctions. In Homo sapiens (Human), this protein is Protein HEG homolog 1 (HEG1).